The following is an 856-amino-acid chain: DNA mismatch repair protein MutS (856 aa).

617–624 is an ATP binding site; it reads GPNMGGKS.

It belongs to the DNA mismatch repair MutS family.

Its function is as follows. This protein is involved in the repair of mismatches in DNA. It is possible that it carries out the mismatch recognition step. This protein has a weak ATPase activity. The protein is DNA mismatch repair protein MutS of Psychromonas ingrahamii (strain DSM 17664 / CCUG 51855 / 37).